The following is a 213-amino-acid chain: Amelogenin, X isoform (213 aa).

The N-terminal stretch at 1–16 is a signal peptide; the sequence is MGTWILFACLLGAAFS. Serine 32 bears the Phosphoserine mark. 2 stretches are compositionally biased toward low complexity: residues 96-105 and 114-160; these read VPQQPMMPVP and QHHQ…QPLQ. The disordered stretch occupies residues 96–213; sequence VPQQPMMPVP…TDKTKREEVD (118 aa). A compositionally biased stretch (pro residues) spans 161–194; the sequence is PLQPQPPVHPIQPLPPQPPLPPIFPMQPLPPMLP.

Belongs to the amelogenin family. In terms of assembly, interacts with KRT5. In terms of processing, phosphorylated by FAM20C in vitro.

The protein resides in the secreted. The protein localises to the extracellular space. It is found in the extracellular matrix. Functionally, plays a role in the biomineralization of teeth. Seems to regulate the formation of crystallites during the secretory stage of tooth enamel development. Thought to play a major role in the structural organization and mineralization of developing enamel. This chain is Amelogenin, X isoform (AMELX), found in Bos taurus (Bovine).